The primary structure comprises 48 residues: Toxin CSTX-15 (48 aa).

4 disulfide bridges follow: cysteine 3–cysteine 18, cysteine 10–cysteine 27, cysteine 17–cysteine 42, and cysteine 29–cysteine 40.

This sequence belongs to the neurotoxin 19 (CSTX) family. 12 subfamily. In terms of assembly, heterodimer of A and B chains; disulfide-linked. Contains 4 disulfide bonds. Expressed by the venom gland.

It is found in the secreted. The chain is Toxin CSTX-15 from Cupiennius salei (American wandering spider).